We begin with the raw amino-acid sequence, 377 residues long: Chaperone protein DnaJ (377 aa).

The J domain occupies 5–70 (DYYQVLGVSR…KKRSAYDQLG (66 aa)). The CR-type zinc-finger motif lies at 138–216 (GVTKIISFKT…CYGEGRYINT (79 aa)). Zn(2+) is bound by residues cysteine 151, cysteine 154, cysteine 168, cysteine 171, cysteine 190, cysteine 193, cysteine 204, and cysteine 207. CXXCXGXG motif repeat units lie at residues 151-158 (CEACTGKG), 168-175 (CPTCRGSG), 190-197 (CQTCRGAG), and 204-211 (CTKCYGEG).

Belongs to the DnaJ family. Homodimer. Zn(2+) is required as a cofactor.

The protein localises to the cytoplasm. In terms of biological role, participates actively in the response to hyperosmotic and heat shock by preventing the aggregation of stress-denatured proteins and by disaggregating proteins, also in an autonomous, DnaK-independent fashion. Unfolded proteins bind initially to DnaJ; upon interaction with the DnaJ-bound protein, DnaK hydrolyzes its bound ATP, resulting in the formation of a stable complex. GrpE releases ADP from DnaK; ATP binding to DnaK triggers the release of the substrate protein, thus completing the reaction cycle. Several rounds of ATP-dependent interactions between DnaJ, DnaK and GrpE are required for fully efficient folding. Also involved, together with DnaK and GrpE, in the DNA replication of plasmids through activation of initiation proteins. This is Chaperone protein DnaJ from Orientia tsutsugamushi (strain Ikeda) (Rickettsia tsutsugamushi).